Consider the following 201-residue polypeptide: Histidinol dehydrogenase (201 aa).

Belongs to the histidinol dehydrogenase family. In terms of assembly, homodimer. The cofactor is Zn(2+).

It carries out the reaction L-histidinol + 2 NAD(+) + H2O = L-histidine + 2 NADH + 3 H(+). It functions in the pathway amino-acid biosynthesis; L-histidine biosynthesis; L-histidine from 5-phospho-alpha-D-ribose 1-diphosphate: step 9/9. Catalyzes the sequential NAD-dependent oxidations of L-histidinol to L-histidinaldehyde and then to L-histidine. The chain is Histidinol dehydrogenase (hisD) from Buchnera aphidicola subsp. Diuraphis noxia.